We begin with the raw amino-acid sequence, 2544 residues long: DNA polymerase theta (2544 aa).

The span at 1–13 (MSLPRRSRKRRRS) shows a compositional bias: basic residues. Residues 1 to 57 (MSLPRRSRKRRRSSSGSDTFSGDGDSFVSPQLRCGPVLSPPPGLGRGRRLTGTGTNK) form a disordered region. Low complexity predominate over residues 14 to 29 (SSGSDTFSGDGDSFVS). Residues Gln95 and 114-121 (APTSAGKT) contribute to the ATP site. Residues 101–285 (LGHVLEGKNL…WLNAELYHTD (185 aa)) enclose the Helicase ATP-binding domain. The helicase activity stretch occupies residues 101-551 (LGHVLEGKNL…STSQDMQTYA (451 aa)). The short motif at 215-218 (DELH) is the DEAH box element. In terms of domain architecture, Helicase C-terminal spans 320 to 551 (GDEDHIVSLC…STSQDMQTYA (232 aa)). Residues 844–890 (DEEEEAAEERRSMRTIWVTGKGLSAREAAALIVEEAKMILQQDLIEM) form an interaction with RAD51 region. The interval 896-955 (PKSPLSSSTHSRTSTSEVKEHTFKSQTKSSHKRLASMGRNSIRASGSNDKPSPDAERGID) is disordered. The segment covering 898-911 (SPLSSSTHSRTSTS) has biased composition (low complexity). The span at 933–945 (GRNSIRASGSNDK) shows a compositional bias: polar residues. Residues 946-955 (PSPDAERGID) show a composition bias toward basic and acidic residues. Lys983 carries the post-translational modification N6-acetyllysine. Over residues 1022-1034 (LSFSSEQVNNTLP) the composition is skewed to polar residues. 2 disordered regions span residues 1022–1058 (LSFSSEQVNNTLPSGRDRKYQKKSWGSSPVRDSGMHR) and 1128–1167 (VGHPAAGSSPAAARDRRGLAARETEKGNEALTENGGESQL). Residues 1128–1139 (VGHPAAGSSPAA) are compositionally biased toward low complexity. Positions 1140–1155 (ARDRRGLAARETEKGN) are enriched in basic and acidic residues. The residue at position 1265 (Ser1265) is a Phosphoserine. 2 disordered regions span residues 1266–1288 (GVQGKTGAHATNRTEHSHASNPA) and 1331–1353 (QNKCHSTPGDQHVPGAANTDHVD). Residues Ser1438, Ser1442, Ser1444, and Ser1449 each carry the phosphoserine modification. The tract at residues 1478–1501 (FSNPPHPQEDPVMTPTVSEPQGTQ) is disordered. Polar residues predominate over residues 1492 to 1501 (PTVSEPQGTQ). Phosphoserine is present on residues Ser1511, Ser1519, Ser1585, and Ser1592. The disordered stretch occupies residues 1557-1591 (ECPQGKLVRGDQNEGSPKPKLTETNQDNSFTWSGA). Positions 1578-1591 (TETNQDNSFTWSGA) are enriched in polar residues. Basic and acidic residues-rich tracts occupy residues 1606–1616 (VSSPRENEKPK) and 1628–1638 (NSKESHEREEI). Positions 1606 to 1697 (VSSPRENEKP…GLIPPTPVPA (92 aa)) are disordered. A compositionally biased stretch (polar residues) spans 1641 to 1652 (DLGTVQRTSVFP). The segment covering 1656-1667 (VKNRTEGLESKA) has biased composition (basic and acidic residues). At Thr1710 the chain carries Phosphothreonine. The interval 2052–2538 (AECESQKHVM…KVKIGASWGE (487 aa)) is DNA polymerase activity. Loop stretches follow at residues 2097 to 2132 (KLPPNGEMKTQGSKKTLGSTRRGNESGRRMRLGRQF) and 2212 to 2276 (EIKM…VPFP). Residues 2104–2117 (MKTQGSKKTLGSTR) are compositionally biased toward polar residues. A disordered region spans residues 2104-2124 (MKTQGSKKTLGSTRRGNESGR). Asp2284 serves as the catalytic For DNA polymerase activity. Residues Asp2284 and Tyr2285 each coordinate Mg(2+). Residues 2445-2489 (QLETFRSTFKSHGHRESMLQNDRTGLLPKRKLKGMFCPMRGGFFI) are loop 3. Asp2494 provides a ligand contact to Mg(2+).

This sequence belongs to the DNA polymerase type-A family. Homomultimer; forms homodimers and homotetramers. Interacts with RAD51. Interacts with ORC2 and ORC4. Interacts with RHNO1; interaction takes place during mitosis and promotes POLQ recruitment to DNA damage sites. Interacts (when phosphorylated) with TOPBP1 (via BRCT domains 7 and 8); promoting POLQ recruitment to DNA damage sites. Requires Mg(2+) as cofactor. In terms of processing, phosphorylated by PLK1; promoting interaction with TOPBP1 and recruitment to DNA damage sites.

It is found in the nucleus. The protein localises to the chromosome. The catalysed reaction is DNA(n) + a 2'-deoxyribonucleoside 5'-triphosphate = DNA(n+1) + diphosphate. It carries out the reaction ATP + H2O = ADP + phosphate + H(+). Low-fidelity DNA polymerase with a helicase activity that promotes microhomology-mediated end-joining (MMEJ), an alternative non-homologous end-joining (NHEJ) machinery required to repair double-strand breaks in DNA during mitosis. MMEJ is an error-prone repair pathway that produces deletions of sequences from the strand being repaired and promotes genomic rearrangements, such as telomere fusions, some of them leading to cellular transformation. MMEJ is required during mitosis to repair persistent double-strand breaks that originate in S-phase. Although error-prone, MMEJ protects against chromosomal instability and tumorigenesis. The polymerase acts by binding directly the 2 ends of resected double-strand breaks, allowing microhomologous sequences in the overhangs to form base pairs. It then extends each strand from the base-paired region using the opposing overhang as a template. Requires partially resected DNA containing 2 to 6 base pairs of microhomology to perform MMEJ. The polymerase lacks proofreading activity and is highly promiscuous: unlike most polymerases, promotes extension of ssDNA and partial ssDNA (pssDNA) substrates. When the ends of a break do not contain terminal microhomology must identify embedded complementary sequences through a scanning step. Also acts as a DNA helicase, promoting dissociation of the replication protein A complex (RPA/RP-A), composed of RPA1, RPA2 and RPA3, from resected double-strand breaks to allow their annealing and subsequent joining by MMEJ. Removal of RPA/RP-A complex proteins prevents RAD51 accumulation at resected ends, thereby inhibiting homology-recombination repair (HR) pathway. Also shows RNA-directed DNA polymerase activity to mediate DNA repair in vitro; however this activity needs additional evidence in vivo. May also have lyase activity. Involved in somatic hypermutation of immunoglobulin genes, a process that requires the activity of DNA polymerases to ultimately introduce mutations at both A/T and C/G base pairs. However, POLQ does not play a major role in somatic hypermutation. POLQ-mediated end joining activity is involved in random integration of exogenous DNA hampers. The chain is DNA polymerase theta from Mus musculus (Mouse).